A 223-amino-acid polypeptide reads, in one-letter code: 2-C-methyl-D-erythritol 4-phosphate cytidylyltransferase (223 aa).

The protein belongs to the IspD/TarI cytidylyltransferase family. IspD subfamily.

It carries out the reaction 2-C-methyl-D-erythritol 4-phosphate + CTP + H(+) = 4-CDP-2-C-methyl-D-erythritol + diphosphate. The protein operates within isoprenoid biosynthesis; isopentenyl diphosphate biosynthesis via DXP pathway; isopentenyl diphosphate from 1-deoxy-D-xylulose 5-phosphate: step 2/6. In terms of biological role, catalyzes the formation of 4-diphosphocytidyl-2-C-methyl-D-erythritol from CTP and 2-C-methyl-D-erythritol 4-phosphate (MEP). In Prochlorococcus marinus (strain MIT 9301), this protein is 2-C-methyl-D-erythritol 4-phosphate cytidylyltransferase.